Here is a 466-residue protein sequence, read N- to C-terminus: MSALTGKHVLVLGLGESGLAMARWCALRGARLRVADSRQTPPGLDTLRADAPLAEIVVGNFGAEVLSGIDLVALSPGVDPRIGIAAEARHRGLPLTGEMSLLAQALDELGVRAQTRILAITGTNGKTTTTALTAALAQAAGLDAVAAGNISPAALDVLMDRLAQGAPLPECWVLELSSFQIETMHALDPEAATVLNVTDDHLDRYAGLDEYAATKAAIFEGRGVQVLNRDDARVAAMALPGRSLIRFGASAPAATDDYGLVEVAGAAWLVRGRERLLALADLPLAGRHNAANTLAALALCEGGLGIAPQRLTGAVVAFRGLPHRVELVAERSDGVRFYDDSKGTNVGATVAALDGMDCPVVLIAGGDGKGQDFSPLREAVVRRARAVVLIGRDAPRIESALQGSAVALEHAPDLDAAVVRASEQAQPGDAVLLSPACASLDMFRNYAHRAEVFIAAARRLPEVRAS.

G122 to T128 provides a ligand contact to ATP.

The protein belongs to the MurCDEF family.

It localises to the cytoplasm. It catalyses the reaction UDP-N-acetyl-alpha-D-muramoyl-L-alanine + D-glutamate + ATP = UDP-N-acetyl-alpha-D-muramoyl-L-alanyl-D-glutamate + ADP + phosphate + H(+). It participates in cell wall biogenesis; peptidoglycan biosynthesis. Functionally, cell wall formation. Catalyzes the addition of glutamate to the nucleotide precursor UDP-N-acetylmuramoyl-L-alanine (UMA). The protein is UDP-N-acetylmuramoylalanine--D-glutamate ligase of Aromatoleum aromaticum (strain DSM 19018 / LMG 30748 / EbN1) (Azoarcus sp. (strain EbN1)).